A 356-amino-acid polypeptide reads, in one-letter code: Peptide chain release factor 1 (356 aa).

Glutamine 234 carries the post-translational modification N5-methylglutamine.

This sequence belongs to the prokaryotic/mitochondrial release factor family. In terms of processing, methylated by PrmC. Methylation increases the termination efficiency of RF1.

The protein resides in the cytoplasm. Peptide chain release factor 1 directs the termination of translation in response to the peptide chain termination codons UAG and UAA. The chain is Peptide chain release factor 1 from Parafrankia sp. (strain EAN1pec).